Consider the following 441-residue polypeptide: Proline--tRNA ligase (441 aa).

This sequence belongs to the class-II aminoacyl-tRNA synthetase family. ProS type 2 subfamily. As to quaternary structure, homodimer.

Its subcellular location is the cytoplasm. It carries out the reaction tRNA(Pro) + L-proline + ATP = L-prolyl-tRNA(Pro) + AMP + diphosphate. In terms of biological role, catalyzes the attachment of proline to tRNA(Pro) in a two-step reaction: proline is first activated by ATP to form Pro-AMP and then transferred to the acceptor end of tRNA(Pro). This is Proline--tRNA ligase from Bartonella tribocorum (strain CIP 105476 / IBS 506).